Here is a 258-residue protein sequence, read N- to C-terminus: uncharacterized protein (258 aa).

A run of 5 helical transmembrane segments spans residues 14–34 (LAFP…LAAI), 53–73 (VIIW…YFFV), 110–130 (AALC…WLAL), 185–205 (GLAL…GIIF), and 238–258 (GINT…AQLI).

It belongs to the TMEM19 family.

Its subcellular location is the cell membrane. This is an uncharacterized protein from Synechocystis sp. (strain ATCC 27184 / PCC 6803 / Kazusa).